Consider the following 529-residue polypeptide: Bifunctional purine biosynthesis protein PurH (529 aa).

One can recognise an MGS-like domain in the interval 1 to 148 (MQQRRPVRRA…KNHKDVAIVV (148 aa)). Lys-287 is subject to N6-acetyllysine.

Belongs to the PurH family.

The enzyme catalyses (6R)-10-formyltetrahydrofolate + 5-amino-1-(5-phospho-beta-D-ribosyl)imidazole-4-carboxamide = 5-formamido-1-(5-phospho-D-ribosyl)imidazole-4-carboxamide + (6S)-5,6,7,8-tetrahydrofolate. It catalyses the reaction IMP + H2O = 5-formamido-1-(5-phospho-D-ribosyl)imidazole-4-carboxamide. The protein operates within purine metabolism; IMP biosynthesis via de novo pathway; 5-formamido-1-(5-phospho-D-ribosyl)imidazole-4-carboxamide from 5-amino-1-(5-phospho-D-ribosyl)imidazole-4-carboxamide (10-formyl THF route): step 1/1. It functions in the pathway purine metabolism; IMP biosynthesis via de novo pathway; IMP from 5-formamido-1-(5-phospho-D-ribosyl)imidazole-4-carboxamide: step 1/1. The polypeptide is Bifunctional purine biosynthesis protein PurH (Escherichia fergusonii (strain ATCC 35469 / DSM 13698 / CCUG 18766 / IAM 14443 / JCM 21226 / LMG 7866 / NBRC 102419 / NCTC 12128 / CDC 0568-73)).